Reading from the N-terminus, the 396-residue chain is MQSTTLYLKTAAFLGGCSLFAATALAATSTATRPQLSNADARAYTIASYMASFGTIGSLTTDNWDPTGGVGAVSGFRANYAVAADGSAQYKTVQAAIDAAVADGGVARKYISVKAGTYNELVCVPESAPPITLYSLDANANNTVIVYNNANPTPASGAKTNPCMGTSSNATVGTVRSATAMVRASNFNARNLTFKNSYVEGTFADNNQSAVALAVRGDKAILENVSVIGNQDTLYLGATNNTMVIRAYFKNSFIQGDTDFIFGAGTAVFHGCTIQYTAARLGARATSYVFAPSTAPDNPHGFLAINSTFNATGNASNNSTHLGRAWDQGVSGTSAYINGSSPNGQVVIRDSSLGAHIRLADPWGPSTAGRPYCSSKCAYSANRFFEYNNTGAGSGN.

The signal sequence occupies residues 1–26; sequence MQSTTLYLKTAAFLGGCSLFAATALA. Thr-174 contacts substrate. Asp-232 functions as the Proton donor in the catalytic mechanism. Catalysis depends on Asp-259, which acts as the Nucleophile. The substrate site is built by Arg-324 and Trp-326.

The protein belongs to the pectinesterase family.

Its subcellular location is the secreted. The catalysed reaction is [(1-&gt;4)-alpha-D-galacturonosyl methyl ester](n) + n H2O = [(1-&gt;4)-alpha-D-galacturonosyl](n) + n methanol + n H(+). It participates in glycan metabolism; pectin degradation; 2-dehydro-3-deoxy-D-gluconate from pectin: step 1/5. In terms of biological role, involved in maceration and soft-rotting of plant tissue. In Ralstonia solanacearum (Pseudomonas solanacearum), this protein is Pectinesterase (pme).